Here is a 725-residue protein sequence, read N- to C-terminus: Polyribonucleotide nucleotidyltransferase (725 aa).

Mg(2+)-binding residues include Asp506 and Asp512. The KH domain occupies 571 to 631 (PLIEQFAIDP…QNIIDACEHI (61 aa)). Residues 657 to 724 (DEVVIGKVER…KKDRIELSSA (68 aa)) enclose the S1 motif domain.

It belongs to the polyribonucleotide nucleotidyltransferase family. The cofactor is Mg(2+).

It localises to the cytoplasm. It carries out the reaction RNA(n+1) + phosphate = RNA(n) + a ribonucleoside 5'-diphosphate. Involved in mRNA degradation. Catalyzes the phosphorolysis of single-stranded polyribonucleotides processively in the 3'- to 5'-direction. The chain is Polyribonucleotide nucleotidyltransferase from Aliarcobacter butzleri (strain RM4018) (Arcobacter butzleri).